A 541-amino-acid chain; its full sequence is Alpha-zingiberene synthase (541 aa).

Residues aspartate 296, aspartate 300, aspartate 437, threonine 441, and glutamate 445 each coordinate Mg(2+). The DDXXD motif motif lies at 296–300; it reads DDIYD.

It belongs to the terpene synthase family. Mg(2+) is required as a cofactor. Requires Mn(2+) as cofactor.

The enzyme catalyses (2E,6E)-farnesyl diphosphate = alpha-zingiberene + diphosphate. The protein operates within secondary metabolite biosynthesis; terpenoid biosynthesis. Its function is as follows. Sesquiterpene synthase that catalyzes the formation of alpha-zingiberene and other sesquiterpenes from trans,trans-farnesyl diphosphate (FPP). May have an additional monoterpene synthase activity. This chain is Alpha-zingiberene synthase (ZIS), found in Ocimum basilicum (Sweet basil).